The following is a 280-amino-acid chain: Hydroxyethylthiazole kinase (280 aa).

Met-50 lines the substrate pocket. Residues Lys-125 and Thr-178 each contribute to the ATP site. Residue Gly-205 coordinates substrate.

It belongs to the Thz kinase family. Requires Mg(2+) as cofactor.

The catalysed reaction is 5-(2-hydroxyethyl)-4-methylthiazole + ATP = 4-methyl-5-(2-phosphooxyethyl)-thiazole + ADP + H(+). Its pathway is cofactor biosynthesis; thiamine diphosphate biosynthesis; 4-methyl-5-(2-phosphoethyl)-thiazole from 5-(2-hydroxyethyl)-4-methylthiazole: step 1/1. Functionally, catalyzes the phosphorylation of the hydroxyl group of 4-methyl-5-beta-hydroxyethylthiazole (THZ). The sequence is that of Hydroxyethylthiazole kinase from Lacticaseibacillus paracasei (strain ATCC 334 / BCRC 17002 / CCUG 31169 / CIP 107868 / KCTC 3260 / NRRL B-441) (Lactobacillus paracasei).